Reading from the N-terminus, the 373-residue chain is MVEGIVFEHVSKKFADSIALNDVSFAINKGEFFSLLGPSGCGKTTLLRILAGFEKPDQGRILLDGQDITKLPANKRPINTVFQNYALFPHLTIWENIAFGLRIAQRSETEIKREVEQMLGLIQMKEHGHKKPDQISGGQKQRVAIARALVNHPRILLLDEPLAALDLKLRQKMLLDLDRIHDEVGITFIFVTHDQSEAMAVSDRIAVLHKGSLEQIGNPIEIYEMPKSSFVADFIGDTNFFDGWVKETAQKEYSLVDVEGFPQIYCFNDKQLSKGDAVHLSVRPEKIHISREQIQAHPLQNVFQGIVDDVIYKGDHTHFGIQVGDRKISVNQQHSRFLLDEAPIKWKDVVWIWWHSDDGFILERCQKLENNNE.

Residues 5 to 235 (IVFEHVSKKF…PKSSFVADFI (231 aa)) enclose the ABC transporter domain. 37-44 (GPSGCGKT) contacts ATP.

This sequence belongs to the ABC transporter superfamily. Spermidine/putrescine importer (TC 3.A.1.11.1) family. As to quaternary structure, the complex is composed of two ATP-binding proteins (PotA), two transmembrane proteins (PotB and PotC) and a solute-binding protein (PotD).

The protein localises to the cell inner membrane. The enzyme catalyses ATP + H2O + polyamine-[polyamine-binding protein]Side 1 = ADP + phosphate + polyamineSide 2 + [polyamine-binding protein]Side 1.. Part of the ABC transporter complex PotABCD involved in spermidine/putrescine import. Responsible for energy coupling to the transport system. This chain is Spermidine/putrescine import ATP-binding protein PotA, found in Protochlamydia amoebophila (strain UWE25).